A 445-amino-acid chain; its full sequence is FAS-associated factor 2 (445 aa).

The residue at position 2 (alanine 2) is an N-acetylalanine. The UBA domain occupies 12–48 (EQTEKLLQFQDLTGIESMEQCRLALEQHNWNMEAAVQ). Position 167 is an N6-acetyllysine (lysine 167). Residues 275–350 (SERLEREERN…EEKERKLECL (76 aa)) adopt a coiled-coil conformation. The segment at 300-361 (SLRADQEKER…PEPSPDDPES (62 aa)) is disordered. Over residues 303–348 (ADQEKERKKREEKERKRRKEEEVQQQKLAEERRRQNLQEEKERKLE) the composition is skewed to basic and acidic residues. Residues 357–439 (DDPESVKIIF…GLSHTEVLFV (83 aa)) form the UBX domain.

Identified in a complex that contains SEL1L, OS9, FAF2/UBXD8, UBE2J1/UBC6E and AUP1. Interacts with YOD1. Interacts (via N-terminus) with UBQLN2 (via C-terminus). Interacts with PNPLA2. Interacts with ZFAND2B; probably through VCP. Interacts with LMBR1L and UBAC2.

It localises to the cytoplasm. The protein resides in the lipid droplet. It is found in the endoplasmic reticulum. Functionally, plays an important role in endoplasmic reticulum-associated degradation (ERAD) that mediates ubiquitin-dependent degradation of misfolded endoplasmic reticulum proteins. By controlling the steady-state expression of the IGF1R receptor, indirectly regulates the insulin-like growth factor receptor signaling pathway. Involved in inhibition of lipid droplet degradation by binding to phospholipase PNPL2 and inhibiting its activity by promoting dissociation of PNPL2 from its endogenous activator, ABHD5 which inhibits the rate of triacylglycerol hydrolysis. Involved in stress granule disassembly: associates with ubiquitinated G3BP1 in response to heat shock, thereby promoting interaction between ubiquitinated G3BP1 and VCP, followed by G3BP1 extraction from stress granules and stress granule disassembly. In Mus musculus (Mouse), this protein is FAS-associated factor 2 (Faf2).